The following is a 273-amino-acid chain: Testis-specific serine/threonine-protein kinase 6 (273 aa).

The Protein kinase domain maps to 12–267; sequence YKLGRTIGEG…AGQVARNCWL (256 aa). ATP is bound by residues 18–26 and Lys41; that span reads IGEGSYSKV. The Proton acceptor role is filled by Asp135.

Belongs to the protein kinase superfamily. CAMK Ser/Thr protein kinase family. Microtubule inner protein component of sperm flagellar doublet microtubules. Interacts with HSP90; this interaction stabilizes and activates TSSK6. Interacts with the heat shock proteins HSPCB, HSPA8 and HSPA1A. These interactions appear to be required for TSSK6 kinase activity. Interacts with TSACC; this interaction is direct and recruits TSACC to HSP90, which is essential for kinase activity. It depends on Mg(2+) as a cofactor. In terms of processing, autophosphorylated. Ubiquitinated; HSP90 activity negatively regulates ubiquitination and degradation. As to expression, highly expressed in testis. Expressed at lower levels in colon, small intestine, ovary, prostate, thymus, spleen and peripheral blood leukocytes.

The protein resides in the cytoplasm. It localises to the cytoskeleton. The protein localises to the flagellum axoneme. It is found in the nucleus. It carries out the reaction L-seryl-[protein] + ATP = O-phospho-L-seryl-[protein] + ADP + H(+). It catalyses the reaction L-threonyl-[protein] + ATP = O-phospho-L-threonyl-[protein] + ADP + H(+). Serine/threonine-protein kinase component of the sperm flagellar doublet microtubules. May act as a regulator of sperm motility by mediating phosphorylation of sperm doublet microtubule proteins. Plays a role in DNA condensation during postmeiotic chromatin remodeling and histone-to-protamine transition during spermatogenesis. The polypeptide is Testis-specific serine/threonine-protein kinase 6 (Homo sapiens (Human)).